Consider the following 348-residue polypeptide: MSKARITYKDAGVDIDAGNTFVKLIKPLVKATSRPEVLADIGGFGGLFSLSSGKYKNPVLVSGTDGVGTKLKIAFLADRHDTIGIDLVAMCVNDIIVQGAEPLFFLDYLATAKLYPGKGAAIIKGVAEGCLQAGCALIGGETAEMPGFYAGDEYDMAGFTVGVVERDKIIDGSSITVGDKLIGLASSGLHSNGYSLARKVIMDVMGLGINDTIPGLDKSVADELLTPTRIYVKSILNLLRDFTIHGIAHITGGGLLENIPRILPNGCKAVVDKTTWQVPEIFKLIQNAGNIEEQEMFRTFNCGIGMVLSVPEKEVEEILIRLSGLNETAFVIGEIAKCDAGTECVEMV.

Belongs to the AIR synthase family.

The protein localises to the cytoplasm. It carries out the reaction 2-formamido-N(1)-(5-O-phospho-beta-D-ribosyl)acetamidine + ATP = 5-amino-1-(5-phospho-beta-D-ribosyl)imidazole + ADP + phosphate + H(+). The protein operates within purine metabolism; IMP biosynthesis via de novo pathway; 5-amino-1-(5-phospho-D-ribosyl)imidazole from N(2)-formyl-N(1)-(5-phospho-D-ribosyl)glycinamide: step 2/2. This is Phosphoribosylformylglycinamidine cyclo-ligase from Geotalea daltonii (strain DSM 22248 / JCM 15807 / FRC-32) (Geobacter daltonii).